We begin with the raw amino-acid sequence, 144 residues long: Large ribosomal subunit protein uL16 (144 aa).

It belongs to the universal ribosomal protein uL16 family. As to quaternary structure, part of the 50S ribosomal subunit.

Its function is as follows. Binds 23S rRNA and is also seen to make contacts with the A and possibly P site tRNAs. This chain is Large ribosomal subunit protein uL16, found in Caldanaerobacter subterraneus subsp. tengcongensis (strain DSM 15242 / JCM 11007 / NBRC 100824 / MB4) (Thermoanaerobacter tengcongensis).